Reading from the N-terminus, the 212-residue chain is DNA-directed RNA polymerase III subunit RPC8 (212 aa).

Ser-162 is subject to Phosphoserine. The segment covering 166 to 184 (RELEERAQLENEIEGKNEE) has biased composition (basic and acidic residues). A disordered region spans residues 166-194 (RELEERAQLENEIEGKNEETPQNEKPPAY).

Belongs to the eukaryotic RPB7/RPC8 RNA polymerase subunit family. In terms of assembly, component of the RNA polymerase III (Pol III) complex consisting of 17 subunits. RPC25/RPC8 and RPC17/RPC9 form a Pol III subcomplex.

The protein localises to the nucleus. In terms of biological role, DNA-dependent RNA polymerase catalyzes the transcription of DNA into RNA using the four ribonucleoside triphosphates as substrates. Specific peripheric component of RNA polymerase III which synthesizes small RNAs, such as 5S rRNA and tRNA. The RPC25/RPC8-RPC17/RPC9 subcomplex may bind Pol III transcripts emerging from the adjacent exit pore during elongation. The polypeptide is DNA-directed RNA polymerase III subunit RPC8 (RPC25) (Saccharomyces cerevisiae (strain ATCC 204508 / S288c) (Baker's yeast)).